A 667-amino-acid chain; its full sequence is DNA ligase (667 aa).

Residues 32–36 (DKDYD) and 80–81 (SL) each bind NAD(+). Residue lysine 121 is the N6-AMP-lysine intermediate of the active site. The NAD(+) site is built by arginine 143, glutamate 178, and lysine 314. Positions 407, 410, 423, and 429 each coordinate Zn(2+). The BRCT domain occupies 587-667 (IVESIFKDKT…EFEKMLGRES (81 aa)).

It belongs to the NAD-dependent DNA ligase family. LigA subfamily. Mg(2+) is required as a cofactor. Mn(2+) serves as cofactor.

It catalyses the reaction NAD(+) + (deoxyribonucleotide)n-3'-hydroxyl + 5'-phospho-(deoxyribonucleotide)m = (deoxyribonucleotide)n+m + AMP + beta-nicotinamide D-nucleotide.. DNA ligase that catalyzes the formation of phosphodiester linkages between 5'-phosphoryl and 3'-hydroxyl groups in double-stranded DNA using NAD as a coenzyme and as the energy source for the reaction. It is essential for DNA replication and repair of damaged DNA. This chain is DNA ligase, found in Clostridium botulinum (strain Alaska E43 / Type E3).